A 289-amino-acid polypeptide reads, in one-letter code: 4-hydroxy-tetrahydrodipicolinate synthase (289 aa).

Threonine 43 is a binding site for pyruvate. Tyrosine 131 functions as the Proton donor/acceptor in the catalytic mechanism. Residue lysine 160 is the Schiff-base intermediate with substrate of the active site. A pyruvate-binding site is contributed by valine 200.

Belongs to the DapA family. Homotetramer; dimer of dimers.

It is found in the cytoplasm. It carries out the reaction L-aspartate 4-semialdehyde + pyruvate = (2S,4S)-4-hydroxy-2,3,4,5-tetrahydrodipicolinate + H2O + H(+). Its pathway is amino-acid biosynthesis; L-lysine biosynthesis via DAP pathway; (S)-tetrahydrodipicolinate from L-aspartate: step 3/4. In terms of biological role, catalyzes the condensation of (S)-aspartate-beta-semialdehyde [(S)-ASA] and pyruvate to 4-hydroxy-tetrahydrodipicolinate (HTPA). The protein is 4-hydroxy-tetrahydrodipicolinate synthase of Methanococcus maripaludis (strain C6 / ATCC BAA-1332).